The sequence spans 521 residues: MIKQALISVSDKTGIVDFAKSLSDLGVKLLSTGGTAKLLADAGLPVTEVADYTGFPEMLDGRVKTLHPKVHGGILARRDLPEHMQALEQHDIPTIDLLVVNLYPFVATIAKDDCTLADAIENIDIGGPTMLRSAAKNHRDVTVVVDPADYAVVLDEMKANGNAIGYATNFRLATKVFAHTAQYDGAITNYLTSLTDELQHASRSAYPATLNMAFDKVQDLRYGENPHQSAAFYRDLAAPAGALANYRQLQGKELSYNNIADSDAAWECVKTFDAPACVIIKHANPCGVAVGNDSADAYAKAFQTDPTSAFGGIIAFNREVDEAAAQAVAKQFVEVLIAPSFSDAAKQVFAAKQNVRLLEIALGDGHNAFDLKRVGGGLLVQSLDSKNVQPSELRVVTKRQPSAKEMDDLLFAWRVAKYVKSNAIVFCGNGMTLGVGAGQMSRVDSARIASIKAQNAGLTLAGSAVASDAFFPFRDGLDVVVAAGATCVIQPGGSMRDDEVIAAADEHGIAMILTGVRHFRH.

One can recognise an MGS-like domain in the interval 1 to 145; that stretch reads MIKQALISVS…KNHRDVTVVV (145 aa).

Belongs to the PurH family.

It carries out the reaction (6R)-10-formyltetrahydrofolate + 5-amino-1-(5-phospho-beta-D-ribosyl)imidazole-4-carboxamide = 5-formamido-1-(5-phospho-D-ribosyl)imidazole-4-carboxamide + (6S)-5,6,7,8-tetrahydrofolate. It catalyses the reaction IMP + H2O = 5-formamido-1-(5-phospho-D-ribosyl)imidazole-4-carboxamide. It functions in the pathway purine metabolism; IMP biosynthesis via de novo pathway; 5-formamido-1-(5-phospho-D-ribosyl)imidazole-4-carboxamide from 5-amino-1-(5-phospho-D-ribosyl)imidazole-4-carboxamide (10-formyl THF route): step 1/1. The protein operates within purine metabolism; IMP biosynthesis via de novo pathway; IMP from 5-formamido-1-(5-phospho-D-ribosyl)imidazole-4-carboxamide: step 1/1. The polypeptide is Bifunctional purine biosynthesis protein PurH (Burkholderia ambifaria (strain MC40-6)).